A 72-amino-acid polypeptide reads, in one-letter code: Alpha-elapitoxin-Dpp2c (72 aa).

5 disulfides stabilise this stretch: C3–C21, C14–C42, C27–C31, C46–C57, and C58–C63.

Belongs to the three-finger toxin family. Long-chain subfamily. Type II alpha-neurotoxin sub-subfamily. In terms of tissue distribution, expressed by the venom gland.

The protein localises to the secreted. In terms of biological role, binds with high affinity to muscular (alpha-1/CHRNA1) and neuronal (alpha-7/CHRNA7) nicotinic acetylcholine receptor (nAChR) and inhibits acetylcholine from binding to the receptor, thereby impairing neuromuscular and neuronal transmission. In Dendroaspis polylepis polylepis (Black mamba), this protein is Alpha-elapitoxin-Dpp2c.